The following is a 278-amino-acid chain: TnpB-like protein MJ0751 (278 aa).

Zn(2+) contacts are provided by cysteine 222, cysteine 225, cysteine 239, and cysteine 242.

The protein in the N-terminal section; belongs to the transposase 2 family. This sequence in the C-terminal section; belongs to the transposase 35 family.

The protein is TnpB-like protein MJ0751 of Methanocaldococcus jannaschii (strain ATCC 43067 / DSM 2661 / JAL-1 / JCM 10045 / NBRC 100440) (Methanococcus jannaschii).